We begin with the raw amino-acid sequence, 232 residues long: Large ribosomal subunit protein uL1 (232 aa).

It belongs to the universal ribosomal protein uL1 family. As to quaternary structure, part of the 50S ribosomal subunit.

In terms of biological role, binds directly to 23S rRNA. The L1 stalk is quite mobile in the ribosome, and is involved in E site tRNA release. Its function is as follows. Protein L1 is also a translational repressor protein, it controls the translation of the L11 operon by binding to its mRNA. The protein is Large ribosomal subunit protein uL1 of Levilactobacillus brevis (strain ATCC 367 / BCRC 12310 / CIP 105137 / JCM 1170 / LMG 11437 / NCIMB 947 / NCTC 947) (Lactobacillus brevis).